A 1141-amino-acid chain; its full sequence is DNA polymerase 120R (1141 aa).

It belongs to the DNA polymerase type-B family.

It catalyses the reaction DNA(n) + a 2'-deoxyribonucleoside 5'-triphosphate = DNA(n+1) + diphosphate. Its function is as follows. DNA-directed DNA polymerase involved in viral DNA replication. The polypeptide is DNA polymerase 120R (Invertebrate iridescent virus 3 (IIV-3)).